We begin with the raw amino-acid sequence, 465 residues long: Cysteine--tRNA ligase (465 aa).

Zn(2+) is bound at residue C27. Positions 29–39 match the 'HIGH' region motif; that stretch reads PTVYNFFHIGN. Positions 207, 232, and 236 each coordinate Zn(2+). A 'KMSKS' region motif is present at residues 264-268; it reads KMSKS. Residue K267 coordinates ATP.

It belongs to the class-I aminoacyl-tRNA synthetase family. In terms of assembly, monomer. Requires Zn(2+) as cofactor.

The protein resides in the cytoplasm. The enzyme catalyses tRNA(Cys) + L-cysteine + ATP = L-cysteinyl-tRNA(Cys) + AMP + diphosphate. In Clostridium kluyveri (strain NBRC 12016), this protein is Cysteine--tRNA ligase.